Consider the following 419-residue polypeptide: Serine hydroxymethyltransferase (419 aa).

(6S)-5,6,7,8-tetrahydrofolate-binding positions include L121 and G125–L127. K230 is subject to N6-(pyridoxal phosphate)lysine. S354 to F356 serves as a coordination point for (6S)-5,6,7,8-tetrahydrofolate.

The protein belongs to the SHMT family. In terms of assembly, homodimer. Requires pyridoxal 5'-phosphate as cofactor.

It is found in the cytoplasm. It carries out the reaction (6R)-5,10-methylene-5,6,7,8-tetrahydrofolate + glycine + H2O = (6S)-5,6,7,8-tetrahydrofolate + L-serine. It functions in the pathway one-carbon metabolism; tetrahydrofolate interconversion. The protein operates within amino-acid biosynthesis; glycine biosynthesis; glycine from L-serine: step 1/1. Functionally, catalyzes the reversible interconversion of serine and glycine with tetrahydrofolate (THF) serving as the one-carbon carrier. This reaction serves as the major source of one-carbon groups required for the biosynthesis of purines, thymidylate, methionine, and other important biomolecules. Also exhibits THF-independent aldolase activity toward beta-hydroxyamino acids, producing glycine and aldehydes, via a retro-aldol mechanism. This chain is Serine hydroxymethyltransferase, found in Prochlorococcus marinus (strain SARG / CCMP1375 / SS120).